Reading from the N-terminus, the 1405-residue chain is Rho guanine nucleotide exchange factor 18 (1405 aa).

Disordered regions lie at residues 1–47 (MGSE…EDGF), 92–115 (ETHR…ALPQ), and 289–330 (PGKS…PGKR). Composition is skewed to basic and acidic residues over residues 92–103 (ETHRQEARRESS) and 308–330 (RQKE…PGKR). The segment at 347 to 372 (SSCPLCGEPLLNSASLKEHPRTTLLS) adopts a C2H2-type; degenerate zinc-finger fold. One can recognise a DH domain in the interval 485–682 (KRQDVLYELM…KDIISQVDAK (198 aa)). The 103-residue stretch at 723-825 (QLHLEGALCW…WMAHIRRAVE (103 aa)) folds into the PH domain. A disordered region spans residues 936-1016 (QVEEGSVSAG…PQAVEMPSTE (81 aa)). Thr952 carries the phosphothreonine modification. The residue at position 961 (Ser961) is a Phosphoserine. The stretch at 1084–1181 (FEKQREERAG…RERLELLRRF (98 aa)) forms a coiled coil. 3 disordered regions span residues 1198 to 1242 (EAQP…VERP), 1274 to 1309 (RQTA…WESS), and 1328 to 1405 (ESAS…VIFF). A phosphoserine mark is found at Ser1336 and Ser1338. Pro residues predominate over residues 1355-1365 (FPAPSPAPAAT). Positions 1375-1394 (TSLPPVSPASSLPTTPLATT) are enriched in low complexity. Positions 1396–1405 (EVSKEDVIFF) are enriched in basic and acidic residues.

As to quaternary structure, interacts with SEPT9; interaction may inhibit GEF activity. Interacts with Gbetagamma subunits GNB1 and GNG2. Interacts with EPB41L4B. Interacts with PATJ (via C-terminus).

It is found in the cytoplasm. Its subcellular location is the cytoskeleton. The protein localises to the cell membrane. The protein resides in the apical cell membrane. In terms of biological role, acts as a guanine nucleotide exchange factor (GEF) for RhoA GTPases. May play a role in actin cytoskeleton reorganization in different tissues since its activation induces formation of actin stress fibers. Also acts as a GEF for RAC1, inducing production of reactive oxygen species (ROS). Does not act as a GEF for CDC42. The G protein beta-gamma (Gbetagamma) subunits of heterotrimeric G proteins act as activators, explaining the integrated effects of LPA and other G-protein coupled receptor agonists on actin stress fiber formation, cell shape change and ROS production. Required for EPB41L4B-mediated regulation of the circumferential actomyosin belt in epithelial cells. The polypeptide is Rho guanine nucleotide exchange factor 18 (Arhgef18) (Mus musculus (Mouse)).